The primary structure comprises 477 residues: Secreted RxLR effector protein 102 (477 aa).

The first 20 residues, 1–20 (MRGGYYVLTALFVVASSEIA), serve as a signal peptide directing secretion. The short motif at 48 to 65 (RFLRESRGVHGNVANEER) is the RxLR-dEER element. 4 disordered regions span residues 326 to 345 (SKGQ…TSKG), 351 to 370 (IKRS…LPSI), 376 to 401 (SSKS…KRSR), and 433 to 455 (PRSA…APSS).

It belongs to the RxLR effector family.

It is found in the secreted. The protein localises to the host nucleus. Secreted effector that acts as an elicitor that induces cell death in host plant cells. This is Secreted RxLR effector protein 102 from Plasmopara viticola (Downy mildew of grapevine).